The chain runs to 310 residues: tRNA dimethylallyltransferase (310 aa).

Position 13–20 (13–20 (GPTASGKT)) interacts with ATP. Substrate is bound at residue 15–20 (TASGKT). 4 interaction with substrate tRNA regions span residues 38–41 (DSAL), 162–166 (QRLSR), 243–248 (RCVGYR), and 276–283 (KRQITWLR).

The protein belongs to the IPP transferase family. Monomer. It depends on Mg(2+) as a cofactor.

The catalysed reaction is adenosine(37) in tRNA + dimethylallyl diphosphate = N(6)-dimethylallyladenosine(37) in tRNA + diphosphate. Its function is as follows. Catalyzes the transfer of a dimethylallyl group onto the adenine at position 37 in tRNAs that read codons beginning with uridine, leading to the formation of N6-(dimethylallyl)adenosine (i(6)A). This is tRNA dimethylallyltransferase from Vibrio atlanticus (strain LGP32) (Vibrio splendidus (strain Mel32)).